A 242-amino-acid polypeptide reads, in one-letter code: Phosphoribosylaminoimidazole-succinocarboxamide synthase (242 aa).

The protein belongs to the SAICAR synthetase family.

The enzyme catalyses 5-amino-1-(5-phospho-D-ribosyl)imidazole-4-carboxylate + L-aspartate + ATP = (2S)-2-[5-amino-1-(5-phospho-beta-D-ribosyl)imidazole-4-carboxamido]succinate + ADP + phosphate + 2 H(+). It functions in the pathway purine metabolism; IMP biosynthesis via de novo pathway; 5-amino-1-(5-phospho-D-ribosyl)imidazole-4-carboxamide from 5-amino-1-(5-phospho-D-ribosyl)imidazole-4-carboxylate: step 1/2. This Methanocaldococcus jannaschii (strain ATCC 43067 / DSM 2661 / JAL-1 / JCM 10045 / NBRC 100440) (Methanococcus jannaschii) protein is Phosphoribosylaminoimidazole-succinocarboxamide synthase (purC).